A 136-amino-acid chain; its full sequence is Protein PsiE (136 aa).

4 helical membrane passes run I15 to L35, Y55 to V75, H83 to V103, and P108 to C128.

It belongs to the PsiE family.

It localises to the cell inner membrane. This Salmonella agona (strain SL483) protein is Protein PsiE.